A 57-amino-acid chain; its full sequence is MAVQQRRVSKSRKGMRRSHDHLTISNTVACNECGKALLPHRACRDCKTYRSIKLSIK.

The protein belongs to the bacterial ribosomal protein bL32 family.

This Ureaplasma parvum serovar 3 (strain ATCC 27815 / 27 / NCTC 11736) protein is Large ribosomal subunit protein bL32.